A 494-amino-acid chain; its full sequence is Lipopolysaccharide core galacturonosyltransferase RgtB (494 aa).

A run of 10 helical transmembrane segments spans residues 9–29 (ISWIFALLAAYFVLQVGVRLA), 74–94 (LTALSIVKNLLLFISYLLYGL), 104–124 (ALVAIATLGLLTIPQMAFEMQ), 127–147 (LTHTVAVFFSASIFFYGFIRS), 156–176 (YLIAGIGIGFGLLAKYNFAIL), 197–217 (WRLGLTAAVALVITLPHLFWL), 251–271 (LALAIISFAALTVAVFAIVFG), 291–311 (MMLVFLAGILLLIVFGGAAGI), 316–336 (LVPMLFILPLYFCLKIEAAGV), and 345–365 (FIPVVAVIMIGVPAALYGSVA).

It belongs to the glycosyltransferase 83 family.

It localises to the cell inner membrane. Its pathway is bacterial outer membrane biogenesis; LPS core biosynthesis. Its function is as follows. Involved in the modification of the lipopolysaccharide (LPS) inner core. Catalyzes the transfer of a galacturonic acid (GalA) residue to the 5-position of the outer Kdo (3-deoxy-D-manno-octulosonic acid) residue of the LPS inner core, using dodecaprenyl phosphate-GalA as the donor substrate. Acts after the other GalA transferase RgtA. In Rhizobium johnstonii (strain DSM 114642 / LMG 32736 / 3841) (Rhizobium leguminosarum bv. viciae), this protein is Lipopolysaccharide core galacturonosyltransferase RgtB.